Consider the following 215-residue polypeptide: MSQQQGKFIVIEGLEGAGKSSAIALVNDIIKQHIGQAPVCTREPGGTPLAEKMRDLVKIADETDPLCDEAECLLIYAARTQLIANVIKPALSVGQWVLGDRHNLSSLAYQGGGRGLMPLVKAVSDACLRGFKPDLTLYLDIDPTLGLSRAASRGELDRIEQQAIDFFERARRTYLQLAHEDDSIVVIDASQSMEQVHNDIGIQLQRHLSTLMSEQ.

13–20 is a binding site for ATP; that stretch reads GLEGAGKS.

This sequence belongs to the thymidylate kinase family.

The enzyme catalyses dTMP + ATP = dTDP + ADP. Phosphorylation of dTMP to form dTDP in both de novo and salvage pathways of dTTP synthesis. The sequence is that of Thymidylate kinase from Shewanella frigidimarina (strain NCIMB 400).